Reading from the N-terminus, the 778-residue chain is Preasperterpenoid A synthase PvPS (778 aa).

Residues 1–414 (MAATKKSTAT…HRYNFHKPAA (414 aa)) are terpene cyclase. Asp176 and Asp180 together coordinate Mg(2+). Asp176 contributes to the substrate binding site. The short motif at 176-180 (DDILD) is the DDXXD 1 element. Residues 266 to 269 (RVIN), Asn310, 314 to 318 (SWEKE), and 406 to 407 (RY) each bind substrate. An NSE/DTE motif is present at residues 310-318 (NDYFSWEKE). The span at 414–431 (AKENEDTDDEGAKSDDSK) shows a compositional bias: basic and acidic residues. The prenyltransferase stretch occupies residues 415–778 (KENEDTDDEG…LRLLLKRLQV (364 aa)). The segment at 416-454 (ENEDTDDEGAKSDDSKTTLNDSTDSTVVDVKTPATSGLL) is disordered. Lys499, Arg502, and His531 together coordinate isopentenyl diphosphate. Positions 538 and 542 each coordinate Mg(2+). Positions 538 to 542 (DDIED) match the DDXXD 2 motif. Arg547 contributes to the dimethylallyl diphosphate binding site. Arg548 provides a ligand contact to isopentenyl diphosphate. Positions 625, 626, 662, 669, 679, and 689 each coordinate dimethylallyl diphosphate.

It in the N-terminal section; belongs to the terpene synthase family. This sequence in the C-terminal section; belongs to the FPP/GGPP synthase family. In terms of assembly, hexamer. It depends on Mg(2+) as a cofactor.

The catalysed reaction is isopentenyl diphosphate + (2E,6E)-farnesyl diphosphate = (2E,6E,10E)-geranylgeranyl diphosphate + diphosphate. The enzyme catalyses isopentenyl diphosphate + (2E,6E,10E)-geranylgeranyl diphosphate = (2E,6E,10E,14E)-geranylfarnesyl diphosphate + diphosphate. It catalyses the reaction (2E,6E,10E,14E)-geranylfarnesyl diphosphate = preasperterpenoid A + diphosphate. It participates in secondary metabolite biosynthesis; terpenoid biosynthesis. Functionally, bifunctional sesterterpene synthase that possesses both prenyl transferase and terpene cyclase activity, converting isopentenyl diphosphate and dimethylallyl diphosphate into geranylfarnesyl diphosphate (GFPP) and further converting GFPP into preasperterpenoid A. This chain is Preasperterpenoid A synthase PvPS, found in Talaromyces verruculosus (Penicillium verruculosum).